Here is a 1326-residue protein sequence, read N- to C-terminus: Putative late blight resistance protein homolog R1B-19 (1326 aa).

Coiled-coil stretches lie at residues 421–444 and 536–558; these read RYSD…ESLQ and PRMK…KLLN. 570–577 lines the ATP pocket; that stretch reads GMPGLGKT. In terms of domain architecture, NB-ARC spans 611-864; that stretch reads LLSLLCDTIG…KVKTCRLHDV (254 aa). Residues 749 to 770 are a coiled coil; that stretch reads SEMEKEVECWEQVANNLGTRIH. LRR repeat units follow at residues 953 to 978, 980 to 996, 1027 to 1050, 1053 to 1070, 1071 to 1094, 1098 to 1118, 1119 to 1146, 1167 to 1191, and 1208 to 1230; these read FKFL…VYLK, FSAH…IYNL, LRHL…SAKL, LETL…LNFP, IRLE…ISAP, YLKL…ADHL, KNLE…MFPQ, FPNL…AMNI, and LIEK…AFKR. The HMA domain occupies 1209–1278; it reads IEKKTLKLNL…AWHARVVVPT (70 aa).

This sequence belongs to the disease resistance NB-LRR family.

It localises to the cytoplasm. It is found in the membrane. In terms of biological role, confers resistance to late blight (Phytophthora infestans) races carrying the avirulence gene Avr1. Resistance proteins guard the plant against pathogens that contain an appropriate avirulence protein via an indirect interaction with this avirulence protein. That triggers a defense system including the hypersensitive response, which restricts the pathogen growth. This chain is Putative late blight resistance protein homolog R1B-19 (R1B-19), found in Solanum demissum (Wild potato).